A 249-amino-acid chain; its full sequence is 5'-nucleotidase SurE (249 aa).

A divalent metal cation contacts are provided by D8, D9, S39, and N91.

The protein belongs to the SurE nucleotidase family. Requires a divalent metal cation as cofactor.

Its subcellular location is the cytoplasm. The catalysed reaction is a ribonucleoside 5'-phosphate + H2O = a ribonucleoside + phosphate. Its function is as follows. Nucleotidase that shows phosphatase activity on nucleoside 5'-monophosphates. This Pseudomonas syringae pv. tomato (strain ATCC BAA-871 / DC3000) protein is 5'-nucleotidase SurE.